A 205-amino-acid chain; its full sequence is Protein GrpE (205 aa).

This sequence belongs to the GrpE family. In terms of assembly, homodimer.

The protein resides in the cytoplasm. Participates actively in the response to hyperosmotic and heat shock by preventing the aggregation of stress-denatured proteins, in association with DnaK and GrpE. It is the nucleotide exchange factor for DnaK and may function as a thermosensor. Unfolded proteins bind initially to DnaJ; upon interaction with the DnaJ-bound protein, DnaK hydrolyzes its bound ATP, resulting in the formation of a stable complex. GrpE releases ADP from DnaK; ATP binding to DnaK triggers the release of the substrate protein, thus completing the reaction cycle. Several rounds of ATP-dependent interactions between DnaJ, DnaK and GrpE are required for fully efficient folding. The polypeptide is Protein GrpE (Shewanella loihica (strain ATCC BAA-1088 / PV-4)).